The following is a 303-amino-acid chain: Acetyl-coenzyme A carboxylase carboxyl transferase subunit beta (303 aa).

The region spanning 25–294 (LWIKCPETGE…NDVSAKSLNG (270 aa)) is the CoA carboxyltransferase N-terminal domain.

Belongs to the AccD/PCCB family. Acetyl-CoA carboxylase is a heterohexamer composed of biotin carboxyl carrier protein (AccB), biotin carboxylase (AccC) and two subunits each of ACCase subunit alpha (AccA) and ACCase subunit beta (AccD).

It is found in the cytoplasm. It catalyses the reaction N(6)-carboxybiotinyl-L-lysyl-[protein] + acetyl-CoA = N(6)-biotinyl-L-lysyl-[protein] + malonyl-CoA. Its pathway is lipid metabolism; malonyl-CoA biosynthesis; malonyl-CoA from acetyl-CoA: step 1/1. Functionally, component of the acetyl coenzyme A carboxylase (ACC) complex. Biotin carboxylase (BC) catalyzes the carboxylation of biotin on its carrier protein (BCCP) and then the CO(2) group is transferred by the transcarboxylase to acetyl-CoA to form malonyl-CoA. The polypeptide is Acetyl-coenzyme A carboxylase carboxyl transferase subunit beta (Rhizobium rhizogenes (strain K84 / ATCC BAA-868) (Agrobacterium radiobacter)).